The sequence spans 236 residues: Probable apoptosis inhibitor 2 (236 aa).

The stretch at 85 to 150 (RKRSFASFKW…AHAADCAFRR (66 aa)) is one BIR repeat. The Zn(2+) site is built by cysteine 123, cysteine 126, histidine 142, and cysteine 146. Residues 189-223 (CKVCFVNEKSVCFLPCRHLVVCAECSPRCKRCCVC) form an RING-type zinc finger.

The protein is Probable apoptosis inhibitor 2 (IAP2) of Orgyia pseudotsugata multicapsid polyhedrosis virus (OpMNPV).